Here is a 681-residue protein sequence, read N- to C-terminus: Type VI secretion system spike protein VgrG2 (681 aa).

Residues 284-309 (AVAGSGKSNSSALQPGQTFSLTEHPN) are disordered. The segment covering 289–309 (GKSNSSALQPGQTFSLTEHPN) has biased composition (polar residues).

It belongs to the VgrG protein family.

Part of the type VI secretion system specialized secretion system, which delivers several virulence factors in both prokaryotic and eukaryotic cells during infection. Plays an essential role in bacterial mobility and biofilm formation. This chain is Type VI secretion system spike protein VgrG2, found in Aeromonas hydrophila.